Reading from the N-terminus, the 96-residue chain is UPF0235 protein YPN_3141 (96 aa).

It belongs to the UPF0235 family.

The chain is UPF0235 protein YPN_3141 from Yersinia pestis bv. Antiqua (strain Nepal516).